Here is a 325-residue protein sequence, read N- to C-terminus: Tetraacyldisaccharide 4'-kinase (325 aa).

An ATP-binding site is contributed by Ser54–Thr61.

The protein belongs to the LpxK family.

It carries out the reaction a lipid A disaccharide + ATP = a lipid IVA + ADP + H(+). It participates in glycolipid biosynthesis; lipid IV(A) biosynthesis; lipid IV(A) from (3R)-3-hydroxytetradecanoyl-[acyl-carrier-protein] and UDP-N-acetyl-alpha-D-glucosamine: step 6/6. Functionally, transfers the gamma-phosphate of ATP to the 4'-position of a tetraacyldisaccharide 1-phosphate intermediate (termed DS-1-P) to form tetraacyldisaccharide 1,4'-bis-phosphate (lipid IVA). The chain is Tetraacyldisaccharide 4'-kinase from Rickettsia felis (strain ATCC VR-1525 / URRWXCal2) (Rickettsia azadi).